We begin with the raw amino-acid sequence, 396 residues long: 1-deoxy-D-xylulose 5-phosphate reductoisomerase (396 aa).

NADPH is bound by residues T10, G11, S12, I13, and N123. K124 is a 1-deoxy-D-xylulose 5-phosphate binding site. NADPH is bound at residue E125. Position 149 (D149) interacts with Mn(2+). S150, E151, S185, and H208 together coordinate 1-deoxy-D-xylulose 5-phosphate. E151 lines the Mn(2+) pocket. An NADPH-binding site is contributed by G214. 1-deoxy-D-xylulose 5-phosphate-binding residues include S221, N226, K227, and E230. E230 provides a ligand contact to Mn(2+).

Belongs to the DXR family. It depends on Mg(2+) as a cofactor. Requires Mn(2+) as cofactor.

It catalyses the reaction 2-C-methyl-D-erythritol 4-phosphate + NADP(+) = 1-deoxy-D-xylulose 5-phosphate + NADPH + H(+). The protein operates within isoprenoid biosynthesis; isopentenyl diphosphate biosynthesis via DXP pathway; isopentenyl diphosphate from 1-deoxy-D-xylulose 5-phosphate: step 1/6. Its function is as follows. Catalyzes the NADPH-dependent rearrangement and reduction of 1-deoxy-D-xylulose-5-phosphate (DXP) to 2-C-methyl-D-erythritol 4-phosphate (MEP). This is 1-deoxy-D-xylulose 5-phosphate reductoisomerase from Shewanella sp. (strain MR-4).